The sequence spans 127 residues: Translation initiation factor 5A (127 aa).

At K35 the chain carries Hypusine.

It belongs to the eIF-5A family.

The protein resides in the cytoplasm. Its function is as follows. Functions by promoting the formation of the first peptide bond. This is Translation initiation factor 5A from Methanospirillum hungatei JF-1 (strain ATCC 27890 / DSM 864 / NBRC 100397 / JF-1).